The primary structure comprises 149 residues: Oocyte-expressed protein (149 aa).

The KH; atypical domain maps to 49 to 110; sequence PLVFYLEAWL…RVQNRVKSVL (62 aa).

Belongs to the KHDC1 family. Component of the subcortical maternal complex (SCMC), at least composed of NLRP5, KHDC3, OOEP, and TLE6. Within the complex, interacts with NLRP5, KHDC3 and TLE6. As part of the SCMC interacts with the SCMC-associated protein NLRP4F. The SCMC may facilitate translocation of its components between the nuclear and cytoplasmic compartments. Forms a scaffold complex with KHDC3/FILIA, and interacts with BLM and TRIM25 at DNA replication forks.

The protein localises to the cytoplasm. The protein resides in the nucleus. Functionally, component of the subcortical maternal complex (SCMC), a multiprotein complex that plays a key role in early embryonic development. The SCMC complex is a structural constituent of cytoplasmic lattices, which consist in fibrous structures found in the cytoplasm of oocytes and preimplantation embryos. They are required to store maternal proteins critical for embryonic development, such as proteins that control epigenetic reprogramming of the preimplantation embryo, and prevent their degradation or activation. As part of the OOEP-KHDC3 scaffold, recruits BLM and TRIM25 to DNA replication forks, thereby promoting the ubiquitination of BLM by TRIM25, enhancing BLM retainment at replication forks and therefore promoting stalled replication fork restart. Positively regulates the homologous recombination-mediated DNA double-strand break (DSB) repair pathway by regulating ATM activation and RAD51 recruitment to DSBs in oocytes. Thereby contributes to oocyte survival and the resumption and completion of meiosis. The chain is Oocyte-expressed protein (OOEP) from Canis lupus familiaris (Dog).